The sequence spans 225 residues: uncharacterized protein (225 aa).

A helical transmembrane segment spans residues 12–32; sequence AGFMMIFVFVIASFLLVLLFF.

It localises to the cell membrane. This is an uncharacterized protein from Bacillus subtilis (strain 168).